The following is a 1402-amino-acid chain: Erbin (1402 aa).

LRR repeat units follow at residues 23 to 44 (TVTT…IFTF), 47 to 68 (TLEE…LFNC), 70 to 91 (SLHK…IANL), 93 to 114 (NLRE…IKNC), 116 to 137 (VLTI…FSQL), 139 to 161 (NLTQ…GRLT), 162 to 183 (KLQI…MNRL), 185 to 206 (QLER…LEQL), 208 to 229 (GLRE…IGSL), 231 to 252 (QLTY…ISTC), 254 to 275 (NLQD…IGSL), 277 to 298 (NVTT…IGGL), 300 to 321 (SIEE…IGQL), 323 to 344 (NMRT…IGNW), 346 to 367 (NITV…MGDM), 369 to 391 (KLKV…TKLQ), and 392 to 413 (QLTA…QKET). 2 positions are modified to phosphoserine: serine 440 and serine 444. 2 disordered regions span residues 465–489 (DEDK…PYPD) and 507–543 (DEET…TTKS). A compositionally biased stretch (basic and acidic residues) spans 470–480 (EREAPPREGNL). The residue at position 483 (tyrosine 483) is a Phosphotyrosine. Position 485 is a phosphothreonine (threonine 485). Basic and acidic residues predominate over residues 507-534 (DEETNEESGRDLKQHEDQQVVNKDKCVK). A phosphoserine mark is found at serine 595, serine 599, serine 600, and serine 617. Residues 629–638 (NKKDDAKDAD) show a composition bias toward basic and acidic residues. The disordered stretch occupies residues 629–694 (NKKDDAKDAD…PVDSNSKVRQ (66 aa)). Residues 647–659 (NSNQNNSNCSSPS) show a composition bias toward low complexity. Polar residues predominate over residues 660 to 689 (RMSDSVSLNTDSSQDTSLCSPVKQTPVDSN). 4 positions are modified to phosphoserine: serine 712, serine 849, serine 854, and serine 869. Positions 824-864 (EDTAPSPGRVEPQKASSSADVGISKSTEDLSPQRSGPTGAV) are disordered. Threonine 914 bears the Phosphothreonine mark. At tyrosine 917 the chain carries Phosphotyrosine. Residue serine 928 is modified to Phosphoserine. Tyrosine 970 bears the Phosphotyrosine mark. Disordered stretches follow at residues 990–1018 (WHPK…ENHS) and 1070–1093 (TTIQ…TRRT). The segment covering 1070 to 1084 (TTIQRQSSVSSTASV) has biased composition (polar residues). Position 1097 is a phosphotyrosine (tyrosine 1097). 3 disordered regions span residues 1107 to 1187 (GRTP…VPHD), 1198 to 1217 (AKKL…CQDD), and 1222 to 1274 (EEQN…VARH). 2 stretches are compositionally biased toward polar residues: residues 1128–1139 (GPNTSRPQSARP) and 1149–1164 (MSVS…PSKR). A phosphoserine mark is found at serine 1150 and serine 1171. 3 positions are modified to phosphoserine: leucine 1231, arginine 1234, and serine 1276. The 90-residue stretch at 1311 to 1400 (EIRVRVEKDP…AVDLIIVREV (90 aa)) folds into the PDZ domain.

This sequence belongs to the LAP (LRR and PDZ) protein family. As to quaternary structure, interacts with ERBB2, BPAG1 and ITGB4. May favor the localization of ERBB2, by restricting its presence to the basolateral membrane of epithelial cells. Also found to interact with ARVCF and delta catenin. Interacts (via C-terminus) with DST (via N-terminus). Interacts with NOD2 (via CARD domain). Isoform 2 is phosphorylated on Ser-1231 and Ser-1234.

It is found in the cell junction. It localises to the hemidesmosome. The protein localises to the nucleus membrane. Its subcellular location is the basolateral cell membrane. In terms of biological role, acts as an adapter for the receptor ERBB2, in epithelia. By binding the unphosphorylated ERBB2 'Tyr-1248' receptor, it may contribute to stabilize this unphosphorylated state. Inhibits NOD2-dependent NF-kappa-B signaling and pro-inflammatory cytokine secretion. The sequence is that of Erbin from Mus musculus (Mouse).